Here is a 659-residue protein sequence, read N- to C-terminus: Hemocyanin subunit B (659 aa).

An N-terminal signal peptide occupies residues 1–18 (MVAKWCVLAMCLLVAVGA). The Cu cation site is built by His198, His202, and His232. Asn318 carries N-linked (GlcNAc...) asparagine glycosylation. 3 residues coordinate Cu cation: His353, His357, and His393. Cys562 and Cys609 form a disulfide bridge.

It belongs to the tyrosinase family. Hemocyanin subfamily. In terms of assembly, 36-chain polymer consisting of 6 hexamers, each of which includes 4 different chains, A, B, C and D. Hemolymph.

The protein resides in the secreted. It is found in the extracellular space. Hemocyanins are copper-containing oxygen carriers occurring freely dissolved in the hemolymph of many mollusks and arthropods. This chain is Hemocyanin subunit B (HCB), found in Scutigera coleoptrata (House centipede).